An 86-amino-acid polypeptide reads, in one-letter code: uncharacterized protein (86 aa).

The next 2 helical transmembrane spans lie at 21 to 43 (VFWV…EATA) and 53 to 75 (FWYA…YFYF).

It is found in the cell membrane. This is an uncharacterized protein from Archaeoglobus fulgidus (strain ATCC 49558 / DSM 4304 / JCM 9628 / NBRC 100126 / VC-16).